The following is a 271-amino-acid chain: 5-deoxy-glucuronate isomerase (271 aa).

This sequence belongs to the isomerase IolB family.

It carries out the reaction 5-deoxy-D-glucuronate = 5-dehydro-2-deoxy-D-gluconate. It participates in polyol metabolism; myo-inositol degradation into acetyl-CoA; acetyl-CoA from myo-inositol: step 4/7. Functionally, involved in the isomerization of 5-deoxy-glucuronate (5DG) to 5-dehydro-2-deoxy-D-gluconate (DKG or 2-deoxy-5-keto-D-gluconate). In Shouchella clausii (strain KSM-K16) (Alkalihalobacillus clausii), this protein is 5-deoxy-glucuronate isomerase.